The primary structure comprises 352 residues: Gap junction alpha-4 protein (352 aa).

The Cytoplasmic segment spans residues 2-23 (GDWEFLEKLLDQVQEHSTSIGK). Residues 24-46 (IWLMVLFIFRILILGLAGESVWG) traverse the membrane as a helical segment. The Extracellular segment spans residues 47–76 (DEQSDFTCNTEQPGCTNVCYDKAFPISHVR). A helical transmembrane segment spans residues 77–99 (YWVLQFLFVSTPTLFYLGHVIYL). At 100–153 (SRKEEKLKQKESELRALDDKEQVEQAIAIIEKKKLKLYIQEDGTVKIKGALMYT) the chain is on the cytoplasmic side. The helical transmembrane segment at 154–176 (YLTSVIFKSIFEAGFLLGQWYLY) threads the bilayer. Residues 177-208 (GFVMTPIYVCERVPCPHKVDCFVSRPMEKTIF) lie on the Extracellular side of the membrane. A helical membrane pass occupies residues 209–231 (IIFMLVVSLISLFLNVLELIHLI). Residues 232–352 (CKSMIHALKK…SSSASKKQYV (121 aa)) are Cytoplasmic-facing. Residues 332 to 352 (HSTVEKASTRASSSASKKQYV) are disordered. Low complexity predominate over residues 340-352 (TRASSSASKKQYV).

It belongs to the connexin family. Alpha-type (group II) subfamily. A connexon is composed of a hexamer of connexins. As to expression, expressed in ovarian somatic cells, heart, leg muscle, liver and eye but not in brain.

It is found in the cell membrane. Its subcellular location is the cell junction. The protein localises to the gap junction. Its function is as follows. One gap junction consists of a cluster of closely packed pairs of transmembrane channels, the connexons, through which materials of low MW diffuse from one cell to a neighboring cell. This chain is Gap junction alpha-4 protein (gja4), found in Xenopus laevis (African clawed frog).